A 106-amino-acid chain; its full sequence is Large ribosomal subunit protein bL21 (106 aa).

The protein belongs to the bacterial ribosomal protein bL21 family. As to quaternary structure, part of the 50S ribosomal subunit. Contacts protein L20.

In terms of biological role, this protein binds to 23S rRNA in the presence of protein L20. This Streptomyces griseus subsp. griseus (strain JCM 4626 / CBS 651.72 / NBRC 13350 / KCC S-0626 / ISP 5235) protein is Large ribosomal subunit protein bL21.